Reading from the N-terminus, the 265-residue chain is Indole-3-glycerol phosphate synthase (265 aa).

Belongs to the TrpC family.

The enzyme catalyses 1-(2-carboxyphenylamino)-1-deoxy-D-ribulose 5-phosphate + H(+) = (1S,2R)-1-C-(indol-3-yl)glycerol 3-phosphate + CO2 + H2O. It functions in the pathway amino-acid biosynthesis; L-tryptophan biosynthesis; L-tryptophan from chorismate: step 4/5. The polypeptide is Indole-3-glycerol phosphate synthase (Xanthomonas oryzae pv. oryzae (strain MAFF 311018)).